A 228-amino-acid chain; its full sequence is Ephrin-A5 (228 aa).

A signal peptide spans 1–20 (MLHVEMLTLVFLVLWMCVFS). Positions 29–162 (ADRYAVYWNS…KLKVFVRPTN (134 aa)) constitute an Ephrin RBD domain. A glycan (N-linked (GlcNAc...) asparagine) is linked at Asn37. 2 disulfide bridges follow: Cys62-Cys102 and Cys90-Cys151. A disordered region spans residues 186 to 205 (EPADDTVHESAEPSRGENAA). Residues 190 to 200 (DTVHESAEPSR) show a composition bias toward basic and acidic residues. The GPI-anchor amidated asparagine moiety is linked to residue Asn203. Residues 204 to 228 (AAQTPRIPSRLLAILLFLLAMLLTL) constitute a propeptide, removed in mature form.

Belongs to the ephrin family. In terms of assembly, binds to EPHB2. Interacts with EPHA8; activates EPHA8. Binds to the receptor tyrosine kinases EPHA2, EPHA3 and EPHB1. Forms a ternary EFNA5-EPHA3-ADAM10 complex mediating EFNA5 extracellular domain shedding by ADAM10 which regulates the EFNA5-EPHA3 complex internalization and function.

It is found in the cell membrane. Its subcellular location is the membrane. The protein localises to the caveola. In terms of biological role, cell surface GPI-bound ligand for Eph receptors, a family of receptor tyrosine kinases which are crucial for migration, repulsion and adhesion during neuronal, vascular and epithelial development. Binds promiscuously Eph receptors residing on adjacent cells, leading to contact-dependent bidirectional signaling into neighboring cells. The signaling pathway downstream of the receptor is referred to as forward signaling while the signaling pathway downstream of the ephrin ligand is referred to as reverse signaling. Induces compartmentalized signaling within a caveolae-like membrane microdomain when bound to the extracellular domain of its cognate receptor. This signaling event requires the activity of the Fyn tyrosine kinase. Activates the EPHA3 receptor to regulate cell-cell adhesion and cytoskeletal organization. With the receptor EPHA2 may regulate lens fiber cells shape and interactions and be important for lens transparency maintenance. May function actively to stimulate axon fasciculation. The interaction of EFNA5 with EPHA5 also mediates communication between pancreatic islet cells to regulate glucose-stimulated insulin secretion. Cognate/functional ligand for EPHA7, their interaction regulates brain development modulating cell-cell adhesion and repulsion. The chain is Ephrin-A5 (EFNA5) from Homo sapiens (Human).